We begin with the raw amino-acid sequence, 126 residues long: Aspartate 1-decarboxylase (126 aa).

The active-site Schiff-base intermediate with substrate; via pyruvic acid is the S25. The residue at position 25 (S25) is a Pyruvic acid (Ser). Substrate is bound at residue T57. Y58 functions as the Proton donor in the catalytic mechanism. Position 73-75 (73-75) interacts with substrate; it reads GAA.

The protein belongs to the PanD family. In terms of assembly, heterooctamer of four alpha and four beta subunits. The cofactor is pyruvate. Post-translationally, is synthesized initially as an inactive proenzyme, which is activated by self-cleavage at a specific serine bond to produce a beta-subunit with a hydroxyl group at its C-terminus and an alpha-subunit with a pyruvoyl group at its N-terminus.

The protein localises to the cytoplasm. It catalyses the reaction L-aspartate + H(+) = beta-alanine + CO2. It participates in cofactor biosynthesis; (R)-pantothenate biosynthesis; beta-alanine from L-aspartate: step 1/1. Functionally, catalyzes the pyruvoyl-dependent decarboxylation of aspartate to produce beta-alanine. The protein is Aspartate 1-decarboxylase of Thioalkalivibrio sulfidiphilus (strain HL-EbGR7).